Here is a 201-residue protein sequence, read N- to C-terminus: Large ribosomal subunit protein uL4 (201 aa).

The tract at residues 43–66 is disordered; sequence TRAQKTRSEVSGGGKKPWRQKGTG.

This sequence belongs to the universal ribosomal protein uL4 family. As to quaternary structure, part of the 50S ribosomal subunit.

Functionally, one of the primary rRNA binding proteins, this protein initially binds near the 5'-end of the 23S rRNA. It is important during the early stages of 50S assembly. It makes multiple contacts with different domains of the 23S rRNA in the assembled 50S subunit and ribosome. In terms of biological role, forms part of the polypeptide exit tunnel. In Tolumonas auensis (strain DSM 9187 / NBRC 110442 / TA 4), this protein is Large ribosomal subunit protein uL4.